Reading from the N-terminus, the 165-residue chain is Lipoprotein signal peptidase (165 aa).

3 consecutive transmembrane segments (helical) span residues Trp12–Gln32, Trp70–Ala90, and Ala102–Val122. Active-site residues include Asp123 and Asp141. A helical membrane pass occupies residues Phe137–Leu157.

It belongs to the peptidase A8 family.

Its subcellular location is the cell inner membrane. The enzyme catalyses Release of signal peptides from bacterial membrane prolipoproteins. Hydrolyzes -Xaa-Yaa-Zaa-|-(S,diacylglyceryl)Cys-, in which Xaa is hydrophobic (preferably Leu), and Yaa (Ala or Ser) and Zaa (Gly or Ala) have small, neutral side chains.. It participates in protein modification; lipoprotein biosynthesis (signal peptide cleavage). Its function is as follows. This protein specifically catalyzes the removal of signal peptides from prolipoproteins. In Cronobacter sakazakii (strain ATCC BAA-894) (Enterobacter sakazakii), this protein is Lipoprotein signal peptidase.